The chain runs to 66 residues: uncharacterized protein (66 aa).

The segment covering 1-20 (MTIINSISNFGSNNSFSNNN) has biased composition (low complexity). The disordered stretch occupies residues 1–47 (MTIINSISNFGSNNSFSNNNTVNQKSVIKRSKQMKNDNTSIGSSFKN). A compositionally biased stretch (polar residues) spans 36–47 (NDNTSIGSSFKN).

This is an uncharacterized protein from Dictyostelium discoideum (Social amoeba).